Here is a 264-residue protein sequence, read N- to C-terminus: Glutamate racemase (264 aa).

Residues 10–11 (DS) and 42–43 (YG) each bind substrate. Catalysis depends on C73, which acts as the Proton donor/acceptor. 74–75 (NT) lines the substrate pocket. C181 acts as the Proton donor/acceptor in catalysis. 182–183 (TH) is a binding site for substrate.

Belongs to the aspartate/glutamate racemases family.

It carries out the reaction L-glutamate = D-glutamate. It participates in cell wall biogenesis; peptidoglycan biosynthesis. Its function is as follows. Provides the (R)-glutamate required for cell wall biosynthesis. The protein is Glutamate racemase of Thermoanaerobacter pseudethanolicus (strain ATCC 33223 / 39E) (Clostridium thermohydrosulfuricum).